A 25-amino-acid polypeptide reads, in one-letter code: ANIVGGIEYSINNASICSVGFSVTR.

Belongs to the peptidase S1 family.

It catalyses the reaction Preferential cleavage: Ala-|-Xaa, Val-|-Xaa in bacterial cell walls, elastin and other proteins.. This is Alpha-lytic protease from Achromobacter lyticus.